Here is a 60-residue protein sequence, read N- to C-terminus: Cytotoxin 1 (60 aa).

4 cysteine pairs are disulfide-bonded: Cys3-Cys21, Cys14-Cys38, Cys42-Cys53, and Cys54-Cys59.

The protein belongs to the three-finger toxin family. Short-chain subfamily. Type IA cytotoxin sub-subfamily. In terms of assembly, monomer in solution; Homodimer and oligomer in the presence of negatively charged lipids forming a pore with a size ranging between 20 and 30 Angstroms. In terms of tissue distribution, expressed by the venom gland.

The protein resides in the secreted. It is found in the target cell membrane. Shows cytolytic activity on many different cells by forming pore in lipid membranes. In vivo, increases heart rate or kills the animal by cardiac arrest. In addition, it binds to heparin with high affinity, interacts with Kv channel-interacting protein 1 (KCNIP1) in a calcium-independent manner, and binds to integrin alpha-V/beta-3 (ITGAV/ITGB3) with moderate affinity. The protein is Cytotoxin 1 of Naja naja (Indian cobra).